A 416-amino-acid chain; its full sequence is Phosphoglycerate kinase (416 aa).

Ser2 bears the N-acetylserine mark. 10 residues coordinate (2R)-3-phosphoglycerate: Val23, Asp24, Phe25, Asn26, Gln38, Arg39, Ser62, His63, Gly65, and Arg66. A Glycyl lysine isopeptide (Lys-Gly) (interchain with G-Cter in ubiquitin) cross-link involves residue Lys82. Phosphothreonine is present on Thr93. Phosphoserine is present on Ser110. Leu121 and Arg122 together coordinate (2R)-3-phosphoglycerate. Phosphoserine occurs at positions 130 and 154. (2R)-3-phosphoglycerate contacts are provided by His168 and Arg169. Position 172 is a phosphoserine (Ser172). Lys197 is covalently cross-linked (Glycyl lysine isopeptide (Lys-Gly) (interchain with G-Cter in ubiquitin)). Thr203 carries the post-translational modification Phosphothreonine. Residue Gly212 coordinates ADP. Gly212 provides a ligand contact to CDP. Positions 213 and 214 each coordinate AMP. Positions 213 and 214 each coordinate ATP. Position 213 (Ala213) interacts with Mg(2+). Ala216 and Asp217 together coordinate Mg(2+). CDP is bound at residue Asp217. Lys218 contributes to the AMP binding site. Lys218 contributes to the ATP binding site. ADP is bound at residue Gly236. Position 236 (Gly236) interacts with CDP. Residue Gly237 participates in AMP binding. Gly237 contributes to the ATP binding site. Thr241 is modified (phosphothreonine). Glycyl lysine isopeptide (Lys-Gly) (interchain with G-Cter in ubiquitin) cross-links involve residues Lys258 and Lys274. Thr298 is subject to Phosphothreonine. Residue Lys302 forms a Glycyl lysine isopeptide (Lys-Gly) (interchain with G-Cter in ubiquitin) linkage. Gly311 contacts AMP. ATP is bound by residues Gly311 and Leu312. Position 318 is a phosphoserine (Ser318). Thr331 carries the post-translational modification Phosphothreonine. Asn335 contributes to the ATP binding site. Residues Gly336 and Phe341 each coordinate CDP. Residue Phe341 participates in ADP binding. Residue Glu342 coordinates AMP. Glu342 is a binding site for ATP. (2R)-3-phosphoglycerate is bound at residue Gly371. The ATP site is built by Asp373 and Thr374. Asp373 serves as a coordination point for Mg(2+). Thr392 bears the Phosphothreonine mark. 2 residues coordinate (2R)-3-phosphoglycerate: Gly394 and Gly395.

This sequence belongs to the phosphoglycerate kinase family. Monomer. Requires Mg(2+) as cofactor.

Its subcellular location is the cytoplasm. It is found in the mitochondrion. It catalyses the reaction (2R)-3-phosphoglycerate + ATP = (2R)-3-phospho-glyceroyl phosphate + ADP. Its pathway is carbohydrate degradation; glycolysis; pyruvate from D-glyceraldehyde 3-phosphate: step 2/5. In terms of biological role, catalyzes one of the two ATP producing reactions in the glycolytic pathway via the reversible conversion of 1,3-diphosphoglycerate to 3-phosphoglycerate. Both L- and D- forms of purine and pyrimidine nucleotides can be used as substrates, but the activity is much lower on pyrimidines. Negatively regulates the biosynthesis of acetyl-CoA from pyruvate in the mitochondrion. This chain is Phosphoglycerate kinase (PGK1), found in Saccharomyces cerevisiae (strain ATCC 204508 / S288c) (Baker's yeast).